The sequence spans 232 residues: Large ribosomal subunit protein uL1 (232 aa).

It belongs to the universal ribosomal protein uL1 family. In terms of assembly, part of the 50S ribosomal subunit.

Its function is as follows. Binds directly to 23S rRNA. The L1 stalk is quite mobile in the ribosome, and is involved in E site tRNA release. Protein L1 is also a translational repressor protein, it controls the translation of the L11 operon by binding to its mRNA. The chain is Large ribosomal subunit protein uL1 from Bacillus pumilus (strain SAFR-032).